Here is a 161-residue protein sequence, read N- to C-terminus: Pathogenesis-related protein 1 (161 aa).

The signal sequence occupies residues 1–26 (MNFTGYSRFLIVFVALVGALVLPSKA). In terms of domain architecture, SCP spans 34–149 (LRVHNQARGA…NGGTIISCNY (116 aa)). Cystine bridges form between cysteine 70–cysteine 138, cysteine 113–cysteine 117, and cysteine 133–cysteine 147.

Belongs to the CRISP family.

Its subcellular location is the secreted. The protein localises to the extracellular space. It localises to the apoplast. Partially responsible for acquired pathogen resistance. The sequence is that of Pathogenesis-related protein 1 from Arabidopsis thaliana (Mouse-ear cress).